A 497-amino-acid polypeptide reads, in one-letter code: NAD(P)H-quinone oxidoreductase subunit 2, chloroplastic (497 aa).

Transmembrane regions (helical) follow at residues 13–33, 37–57, 76–96, 103–123, 129–149, 164–184, 206–226, 240–260, 274–294, 311–331, 332–352, 373–393, 406–426, and 462–482; these read VILP…LDLI, SAWL…ALVF, FTIS…LIST, GMGL…GLFL, LVTV…LVGY, LLMG…LYGL, IAVW…LSAF, PTPV…ALAT, WHVL…LIAA, AGYL…GMIT, YMVT…LFGL, AFCL…AGFF, GLYL…YYYL, and VGIA…NPII.

It belongs to the complex I subunit 2 family. As to quaternary structure, NDH is composed of at least 16 different subunits, 5 of which are encoded in the nucleus.

It is found in the plastid. It localises to the chloroplast thylakoid membrane. It catalyses the reaction a plastoquinone + NADH + (n+1) H(+)(in) = a plastoquinol + NAD(+) + n H(+)(out). It carries out the reaction a plastoquinone + NADPH + (n+1) H(+)(in) = a plastoquinol + NADP(+) + n H(+)(out). Functionally, NDH shuttles electrons from NAD(P)H:plastoquinone, via FMN and iron-sulfur (Fe-S) centers, to quinones in the photosynthetic chain and possibly in a chloroplast respiratory chain. The immediate electron acceptor for the enzyme in this species is believed to be plastoquinone. Couples the redox reaction to proton translocation, and thus conserves the redox energy in a proton gradient. This is NAD(P)H-quinone oxidoreductase subunit 2, chloroplastic from Zygnema circumcarinatum (Green alga).